We begin with the raw amino-acid sequence, 350 residues long: Transmembrane protein 185B (350 aa).

7 consecutive transmembrane segments (helical) span residues 16–36 (LIYA…DGVI), 41–61 (WAVF…ASVG), 81–101 (FKAM…EVLV), 111–131 (FWLL…AACV), 168–188 (WLVV…VVLY), 211–231 (VTMA…EVLL), and 240–260 (MFSY…LMAT).

This sequence belongs to the TMEM185 family.

The protein resides in the membrane. This is Transmembrane protein 185B (TMEM185B) from Bos taurus (Bovine).